The following is a 254-amino-acid chain: Coenzyme F420:L-glutamate ligase (254 aa).

GTP-binding positions include 11 to 14 (IPLI), 40 to 41 (ST), and K45. D109 contacts a divalent metal cation. N112 serves as a coordination point for GTP. A divalent metal cation contacts are provided by D150, T151, and E208. 206–213 (MGEGAGGI) contributes to the GTP binding site.

The protein belongs to the CofE family. In terms of assembly, homodimer. The cofactor is Mg(2+). Mn(2+) is required as a cofactor. It depends on K(+) as a cofactor.

The enzyme catalyses oxidized coenzyme F420-0 + GTP + L-glutamate = oxidized coenzyme F420-1 + GDP + phosphate + H(+). The catalysed reaction is oxidized coenzyme F420-1 + GTP + L-glutamate = oxidized coenzyme F420-2 + GDP + phosphate + H(+). The protein operates within cofactor biosynthesis; coenzyme F420 biosynthesis. Its function is as follows. Catalyzes the GTP-dependent successive addition of two or more gamma-linked L-glutamates to the L-lactyl phosphodiester of 7,8-didemethyl-8-hydroxy-5-deazariboflavin (F420-0) to form coenzyme F420-0-glutamyl-glutamate (F420-2) or polyglutamated F420 derivatives. In Methanosarcina mazei (strain ATCC BAA-159 / DSM 3647 / Goe1 / Go1 / JCM 11833 / OCM 88) (Methanosarcina frisia), this protein is Coenzyme F420:L-glutamate ligase.